A 137-amino-acid chain; its full sequence is Universal stress protein HP_0031 (137 aa).

This sequence belongs to the universal stress protein A family.

The protein is Universal stress protein HP_0031 of Helicobacter pylori (strain ATCC 700392 / 26695) (Campylobacter pylori).